We begin with the raw amino-acid sequence, 131 residues long: Small ribosomal subunit protein bS6 (131 aa).

Positions 98–131 (EASPMARARDERDSRRGPAGERSYDEAHAEEIGE) are disordered. Residues 104-131 (RARDERDSRRGPAGERSYDEAHAEEIGE) show a composition bias toward basic and acidic residues.

It belongs to the bacterial ribosomal protein bS6 family.

Functionally, binds together with bS18 to 16S ribosomal RNA. In Shewanella putrefaciens (strain CN-32 / ATCC BAA-453), this protein is Small ribosomal subunit protein bS6.